The chain runs to 100 residues: DNA-binding protein HU (100 aa).

The protein belongs to the bacterial histone-like protein family.

Histone-like DNA-binding protein which is capable of wrapping DNA to stabilize it, and thus to prevent its denaturation under extreme environmental conditions. This is DNA-binding protein HU (hup) from Synechocystis sp. (strain ATCC 27184 / PCC 6803 / Kazusa).